The sequence spans 1156 residues: Mastermind-like protein 2 (1156 aa).

The tract at residues 81 to 165 (QHGQGARKAG…PPASTPGDQR (85 aa)) is disordered. Over residues 113-122 (PAASQAAATA) the composition is skewed to low complexity. Over residues 153 to 165 (EQQPPASTPGDQR) the composition is skewed to polar residues. Phosphoserine is present on Ser175. Disordered regions lie at residues 340-359 (FNIDLGQQSQRSTPRPSLPM), 369-506 (SPGL…GSGQ), 531-630 (QQKP…QQQQ), 658-680 (QQQQQQQQPSSQPAQSLPSQPLL), 705-743 (YQVSQQQRQDQHSVVGQNTGPSPSPNPCSNPNTGSGYMN), 784-820 (IAPQDQINRHLSRPPPDYKDQRRNVGNMQPTAQYSGG), and 1059-1100 (LPNL…FQGT). 4 stretches are compositionally biased toward polar residues: residues 344-354 (LGQQSQRSTPR), 371-380 (GLTQGPSGSP), 393-419 (MANSALSTSSPIPSVPQSQAQPQTGSG), and 428-437 (QEVSHAQQLK). Positions 440–470 (AANRQQHARMQQHQQQHQPTNWSALPSSAGP) are enriched in low complexity. 3 stretches are compositionally biased toward polar residues: residues 484-496 (SFGQQTFSPQSSP), 532-543 (QKPQDLSRSFIN), and 563-587 (NSDQANQQMPSVLPSQNKPSLLHYT). Low complexity predominate over residues 588 to 630 (QQQQQQQQQQQQQQQQQQQQQQQQQQQQQQQQQQSSISAQQQQ). Low complexity-rich tracts occupy residues 706–725 (QVSQQQRQDQHSVVGQNTGP) and 733–743 (SNPNTGSGYMN). Residues 807–820 (NVGNMQPTAQYSGG) show a composition bias toward polar residues.

The protein belongs to the mastermind family. In terms of assembly, interacts through its N-terminal region with the ankyrin repeat region of the Notch proteins NOTCH1, NOTCH2, NOTCH3 and NOTCH4. Forms a DNA-binding complex with Notch proteins and RBPSUH/RBP-J kappa. In terms of tissue distribution, widely expressed with high levels detected in placenta, salivary gland and skeletal muscle.

It localises to the nucleus speckle. Functionally, acts as a transcriptional coactivator for NOTCH proteins. Has been shown to amplify NOTCH-induced transcription of HES1. Potentiates activation by NOTCH3 and NOTCH4 more efficiently than MAML1 or MAML3. The chain is Mastermind-like protein 2 (MAML2) from Homo sapiens (Human).